The primary structure comprises 434 residues: Nicotinate phosphoribosyltransferase (434 aa).

Position 242 is a phosphohistidine; by autocatalysis (His242).

The protein belongs to the NAPRTase family. In terms of processing, transiently phosphorylated on a His residue during the reaction cycle. Phosphorylation strongly increases the affinity for substrates and increases the rate of nicotinate D-ribonucleotide production. Dephosphorylation regenerates the low-affinity form of the enzyme, leading to product release.

It carries out the reaction nicotinate + 5-phospho-alpha-D-ribose 1-diphosphate + ATP + H2O = nicotinate beta-D-ribonucleotide + ADP + phosphate + diphosphate. It functions in the pathway cofactor biosynthesis; NAD(+) biosynthesis; nicotinate D-ribonucleotide from nicotinate: step 1/1. In terms of biological role, catalyzes the synthesis of beta-nicotinate D-ribonucleotide from nicotinate and 5-phospho-D-ribose 1-phosphate at the expense of ATP. This chain is Nicotinate phosphoribosyltransferase, found in Sinorhizobium fredii (strain NBRC 101917 / NGR234).